The primary structure comprises 202 residues: Energy-coupling factor transporter transmembrane protein BioN (202 aa).

3 consecutive transmembrane segments (helical) span residues 21-40, 44-63, and 68-90; these read LLSL…LLLL, VLVA…EALL, and IFLT…AALV.

It belongs to the CbiQ family. As to quaternary structure, part of a biotin transporter complex composed of BioM, BioN and BioY.

Its subcellular location is the cell inner membrane. In terms of biological role, involved in biotin uptake. This chain is Energy-coupling factor transporter transmembrane protein BioN (bioN), found in Rhizobium etli (strain ATCC 51251 / DSM 11541 / JCM 21823 / NBRC 15573 / CFN 42).